Consider the following 647-residue polypeptide: RalA-binding protein 1 (647 aa).

Disordered stretches follow at residues 1–151 (MTEC…EKKC) and 163–186 (WKEK…APSL). T2 is modified (N-acetylthreonine). The segment covering 24–33 (LTRTPSSEEI) has biased composition (polar residues). 3 positions are modified to phosphoserine: S29, S30, and S34. Position 44 is a phosphothreonine (T44). Phosphoserine occurs at positions 48 and 62. Residues 52–68 (DILHEPPDIVSDDEKDH) show a composition bias toward basic and acidic residues. 69–74 (GKKKGK) is an ATP binding site. Residues 69-79 (GKKKGKFKKKE) are compositionally biased toward basic residues. Phosphoserine is present on residues S92 and S93. Basic residues predominate over residues 102-118 (KMKRSKGIHVFKKPSFS). Positions 102–119 (KMKRSKGIHVFKKPSFSK) are nuclear localization signal. Positions 119 to 151 (KKKEKDFKIKEKPKEEKHKEEKHKEEKHKEKKC) are enriched in basic and acidic residues. A mediates association with membranes and could form transmembrane domains region spans residues 154 to 219 (FTAADVVKQW…PAVFRECVDY (66 aa)). A Rho-GAP domain is found at 192–380 (APFADAVERT…VLLKQVTRPL (189 aa)). The mediates interaction with RALA and RALB stretch occupies residues 403-499 (RRQEFLLNCL…LTEQEELLAM (97 aa)). 418–425 (GGIKDFSK) contributes to the ATP binding site. Residues S461 and S463 each carry the phosphoserine modification. The segment at 500–647 (EQFLRRQIAS…PSKDRKETPI (148 aa)) is mediates interaction with REPS1 and REPS2. Disordered regions lie at residues 525-550 (QSRQ…DEEE) and 601-647 (EQQL…ETPI). Acidic residues predominate over residues 535–550 (EEYSSDSESESEDEEE). Residues 628–647 (RAAKEQAKPSPSKDRKETPI) show a composition bias toward basic and acidic residues. S637 carries the post-translational modification Phosphoserine.

In terms of assembly, interacts with the GTP-bound form of RALA (via effector domain); during mitosis, recruits RALBP1 to the mitochondrion where it promotes DNM1L phosphorylation and mitochondrial fission. Interacts with DNM1L; mediates its mitotic kinase cyclin B-CDK1-mediated phosphorylation during mitosis to promote mitochondrial fission. Interacts with the mitotic kinase cyclin B-CDK1 during mitosis. Interacts with the GTP-bound form of RALB (via effector domain). Interacts with REPS1; the interaction is direct and does not affect RALA-binding nor GTPase activator activity of RALBP1. Interacts with REPS2; the interaction is direct and does not affect RALA-binding nor GTPase activator activity of RALBP1. Interacts with EPN1, NUMB and TFAP2A during interphase and mitosis. Interacts with AP2M1; as part of the AP2 complex. Interacts with CDC42. Interacts with RAC1. Tyrosine-phosphorylated upon stimulation of cells with EGF. Post-translationally, may undergo proteolytic cleavage to give peptides which reassemble to form a transporter complex. Ubiquitously expressed.

The protein resides in the cell membrane. The protein localises to the cytoplasm. It localises to the cytosol. It is found in the cytoskeleton. Its subcellular location is the spindle pole. The protein resides in the nucleus. The protein localises to the mitochondrion. It carries out the reaction an S-substituted glutathione(in) + ATP + H2O = an S-substituted glutathione(out) + ADP + phosphate + H(+). It catalyses the reaction ATP + H2O + xenobioticSide 1 = ADP + phosphate + xenobioticSide 2.. The catalysed reaction is leukotriene C4(in) + ATP + H2O = leukotriene C4(out) + ADP + phosphate + H(+). Multifunctional protein that functions as a downstream effector of RALA and RALB. As a GTPase-activating protein/GAP can inactivate CDC42 and RAC1 by stimulating their GTPase activity. As part of the Ral signaling pathway, may also regulate ligand-dependent EGF and insulin receptors-mediated endocytosis. During mitosis, may act as a scaffold protein in the phosphorylation of EPSIN/EPN1 by the mitotic kinase cyclin B-CDK1, preventing endocytosis during that phase of the cell cycle. During mitosis, also controls mitochondrial fission as an effector of RALA. Recruited to mitochondrion by RALA, acts as a scaffold to foster the mitotic kinase cyclin B-CDK1-mediated phosphorylation and activation of DNM1L. Its function is as follows. Could also function as a primary ATP-dependent active transporter for glutathione conjugates of electrophiles. May also actively catalyze the efflux of a wide range of substrates including xenobiotics like doxorubicin (DOX) contributing to cell multidrug resistance. This is RalA-binding protein 1 from Rattus norvegicus (Rat).